Consider the following 510-residue polypeptide: Cytochrome P450 monooxygenase btcC (510 aa).

A helical transmembrane segment spans residues 1 to 21; sequence MSFPGVIFVVSFFPLLMGIAV. Residue C446 coordinates heme.

Belongs to the cytochrome P450 family. Requires heme as cofactor.

It is found in the membrane. Its pathway is secondary metabolite biosynthesis; terpenoid biosynthesis. Its function is as follows. Cytochrome P450 monooxygenase; part of the gene cluster that mediates the biosynthesis of betaestacins. The bifunctional terpene synthase btcA converts isopentenyl diphosphate (IPP) and dimethylallyl diphosphate (DMAPP) into the sesterterpene betaestacin I. The C-terminal prenyltransferase (PT) domain of btcA catalyzes formation of GFPP, whereas the N-terminal terpene cyclase (TC) domain catalyzes the cyclization of GFPP into betaestacin I. The cytochrome P450 monooxygenase btcB is then responsible for the six-step oxidation of betaestacin I to yield betaestacin II. The roles of the cytochrome P450 monooxygenase btcC and the alpha-ketoglutarate-dependent dioxygenase btcD have not been identified yet. The chain is Cytochrome P450 monooxygenase btcC from Neocamarosporium betae (Beet black rot fungus).